The primary structure comprises 334 residues: Phospholipase A1 2 (334 aa).

Residues 1–23 (MMNLKYLLFFCLVQALHYCYAYG) form the signal peptide. The propeptide occupies 24 to 33 (DPSLSNELDR). An intrachain disulfide couples C37 to C120. The active-site Nucleophile is S170. Residue D198 is the Charge relay system of the active site. Cystine bridges form between C209–C214 and C252–C261. Catalysis depends on H263, which acts as the Charge relay system. Disulfide bonds link C278–C302, C279–C327, and C295–C300.

The protein belongs to the AB hydrolase superfamily. Lipase family. Not glycosylated. As to expression, expressed by the venom gland.

The protein resides in the secreted. The catalysed reaction is a 1,2-diacyl-sn-glycero-3-phosphocholine + H2O = a 2-acyl-sn-glycero-3-phosphocholine + a fatty acid + H(+). Functionally, catalyzes the hydrolysis of phosphatidylcholine with phospholipase A1 activity (6.3 U/ml). May act as an allergen and induce hemolytic activity. The polypeptide is Phospholipase A1 2 (Vespa affinis (Lesser banded hornet)).